A 606-amino-acid chain; its full sequence is Glutamine--fructose-6-phosphate aminotransferase [isomerizing] (606 aa).

Cysteine 2 functions as the Nucleophile; for GATase activity in the catalytic mechanism. The 216-residue stretch at 2 to 217 folds into the Glutamine amidotransferase type-2 domain; sequence CGIVGMVGEN…DGDVMVLRKD (216 aa). SIS domains lie at 284–423 and 455–596; these read YEEL…INGY and LSEK…PDKP. Residue lysine 601 is the For Fru-6P isomerization activity of the active site.

Homodimer.

It localises to the cytoplasm. The catalysed reaction is D-fructose 6-phosphate + L-glutamine = D-glucosamine 6-phosphate + L-glutamate. In terms of biological role, catalyzes the first step in hexosamine metabolism, converting fructose-6P into glucosamine-6P using glutamine as a nitrogen source. The chain is Glutamine--fructose-6-phosphate aminotransferase [isomerizing] from Thermotoga maritima (strain ATCC 43589 / DSM 3109 / JCM 10099 / NBRC 100826 / MSB8).